The chain runs to 426 residues: Transcription factor bHLH60 (426 aa).

Composition is skewed to polar residues over residues 117–137 (QNGNISGETPTSSVPSNSSAN) and 148–172 (TDSSQRLISDSAIENQIPCPNQNNR). Residues 117–201 (QNGNISGETP…SSEENEKLPY (85 aa)) are disordered. The segment covering 191-200 (KSSEENEKLP) has biased composition (basic and acidic residues). Positions 210–307 (QATDSHSLAE…DEIINHVQSL (98 aa)) constitute a bHLH domain. Residues 367-398 (HRQLQQPPTQQWPFDGLNQPVWGREEDQAHGN) are disordered.

In terms of assembly, homodimer. Expressed constitutively in roots, leaves, stems, and flowers.

Its subcellular location is the nucleus. The protein is Transcription factor bHLH60 (BHLH60) of Arabidopsis thaliana (Mouse-ear cress).